We begin with the raw amino-acid sequence, 419 residues long: Acyl-[acyl-carrier-protein] desaturase 6, chloroplastic (419 aa).

A chloroplast-targeting transit peptide spans 1–54 (MAATATMAMPLANRLRCKPNTNSSSPSRTLFGRRVTMISSSRWGSAVSGSAIMS). Positions 151, 189, 192, 242, 277, and 280 each coordinate Fe cation.

It belongs to the fatty acid desaturase type 2 family. In terms of assembly, homodimer. Fe(2+) serves as cofactor.

It is found in the plastid. The protein resides in the chloroplast. It functions in the pathway lipid metabolism; fatty acid metabolism. Functionally, introduces a cis double bond in the acyl chain of an acyl-[acyl-carrier protein]. The protein is Acyl-[acyl-carrier-protein] desaturase 6, chloroplastic of Oryza sativa subsp. japonica (Rice).